Consider the following 200-residue polypeptide: Potassium-transporting ATPase KdpC subunit (200 aa).

A helical membrane pass occupies residues 6 to 26 (PALVLLILLTLITGIAYPLLT).

It belongs to the KdpC family. As to quaternary structure, the system is composed of three essential subunits: KdpA, KdpB and KdpC.

The protein localises to the cell inner membrane. Functionally, part of the high-affinity ATP-driven potassium transport (or Kdp) system, which catalyzes the hydrolysis of ATP coupled with the electrogenic transport of potassium into the cytoplasm. This subunit acts as a catalytic chaperone that increases the ATP-binding affinity of the ATP-hydrolyzing subunit KdpB by the formation of a transient KdpB/KdpC/ATP ternary complex. This Yersinia pseudotuberculosis serotype O:1b (strain IP 31758) protein is Potassium-transporting ATPase KdpC subunit.